Here is a 482-residue protein sequence, read N- to C-terminus: Anaerobic nitric oxide reductase flavorubredoxin (482 aa).

The interval 30 to 210 (LRGSSYNSYL…PFSRLVTPKI (181 aa)) is zinc metallo-hydrolase. Positions 79, 81, 83, 147, 166, and 227 each coordinate Fe cation. The Flavodoxin-like domain occupies 254–393 (ITIFYDTMSN…LCRQHGRDIA (140 aa)). Residues 260-264 (TMSNN) and 342-369 (AFGS…EMSL) contribute to the FMN site. Residues 426–477 (GPMMQCSVCQWVYDPAKGEPNQDVQPGTPWSEVPDNFLCPECSLGKDVFDVL) form the Rubredoxin-like domain. 4 residues coordinate Fe cation: C431, C434, C464, and C467.

In the N-terminal section; belongs to the zinc metallo-hydrolase group 3 family. As to quaternary structure, homotetramer. Fe cation is required as a cofactor. The cofactor is FMN.

Its subcellular location is the cytoplasm. It functions in the pathway nitrogen metabolism; nitric oxide reduction. Functionally, anaerobic nitric oxide reductase; uses NADH to detoxify nitric oxide (NO), protecting several 4Fe-4S NO-sensitive enzymes. Has at least 2 reductase partners, only one of which (NorW, flavorubredoxin reductase) has been identified. NO probably binds to the di-iron center; electrons enter from the NorW at rubredoxin and are transferred sequentially to the FMN center and the di-iron center. Also able to function as an aerobic oxygen reductase. The protein is Anaerobic nitric oxide reductase flavorubredoxin of Klebsiella pneumoniae subsp. pneumoniae (strain ATCC 700721 / MGH 78578).